A 372-amino-acid chain; its full sequence is MSRRRFDCRSISGLLTTTPQIPIKMENFNNFYILTSKELGRGKFAVVRQCISKSTGQEYAAKFLKKRRRGQDCRAEILHEIAVLELAKSCPRVINLHEVYENTSEIILILEYAAGGEIFSLCLPELAEMVSENDVIRLIKQILEGVYYLHQNNIVHLDLKPQNILLSSIYPLGDIKIVDFGMSRKIGHACELREIMGTPEYLAPEILNYDPITTATDMWNIGIIAYMLLTHTSPFVGEDNQETYLNISQVNVDYSEETFSSVSQLATDFIQSLLVKNPEKRPTAEICLSHSWLQQWDFENLFHPEETSSSSQTQDHSVRSSEDKTSKSSCNGTCGDREDKENIPEDSSMVSKRFRFDDSLPNPHELVSDLLC.

The Protein kinase domain occupies 33-293 (ILTSKELGRG…AEICLSHSWL (261 aa)). Residues 39-47 (LGRGKFAVV) and K62 each bind ATP. The active-site Proton acceptor is the D158. Positions 305–362 (EETSSSSQTQDHSVRSSEDKTSKSSCNGTCGDREDKENIPEDSSMVSKRFRFDDSLPN) are disordered. Residues 316-326 (HSVRSSEDKTS) are compositionally biased toward basic and acidic residues.

Belongs to the protein kinase superfamily. CAMK Ser/Thr protein kinase family. DAP kinase subfamily. In terms of assembly, interacts with CHP1; the interaction induces CHP1 to translocate from the Golgi to the nucleus. In terms of processing, autophosphorylated. As to expression, highly expressed in placenta, lung, pancreas. Lower levels in heart, brain, liver, skeletal muscle and kidney.

It localises to the nucleus. Its subcellular location is the cell membrane. The protein localises to the endoplasmic reticulum-Golgi intermediate compartment. The catalysed reaction is L-seryl-[protein] + ATP = O-phospho-L-seryl-[protein] + ADP + H(+). It catalyses the reaction L-threonyl-[protein] + ATP = O-phospho-L-threonyl-[protein] + ADP + H(+). Phosphorylates myosin light chains. Acts as a positive regulator of apoptosis. In Homo sapiens (Human), this protein is Serine/threonine-protein kinase 17B (STK17B).